The following is a 248-amino-acid chain: 3-deoxy-manno-octulosonate cytidylyltransferase 2 (248 aa).

The protein belongs to the KdsB family.

Its subcellular location is the cytoplasm. It carries out the reaction 3-deoxy-alpha-D-manno-oct-2-ulosonate + CTP = CMP-3-deoxy-beta-D-manno-octulosonate + diphosphate. Its pathway is nucleotide-sugar biosynthesis; CMP-3-deoxy-D-manno-octulosonate biosynthesis; CMP-3-deoxy-D-manno-octulosonate from 3-deoxy-D-manno-octulosonate and CTP: step 1/1. It functions in the pathway bacterial outer membrane biogenesis; lipopolysaccharide biosynthesis. In terms of biological role, activates KDO (a required 8-carbon sugar) for incorporation into bacterial lipopolysaccharide in Gram-negative bacteria. The chain is 3-deoxy-manno-octulosonate cytidylyltransferase 2 from Hydrogenovibrio crunogenus (strain DSM 25203 / XCL-2) (Thiomicrospira crunogena).